Reading from the N-terminus, the 94-residue chain is Translation initiation factor 1A 2 (94 aa).

In terms of domain architecture, S1-like spans 6-80 (GRRNLRMPND…EKANVEWRYS (75 aa)).

This sequence belongs to the eIF-1A family.

Seems to be required for maximal rate of protein biosynthesis. Enhances ribosome dissociation into subunits and stabilizes the binding of the initiator Met-tRNA(I) to 40 S ribosomal subunits. This chain is Translation initiation factor 1A 2 (eIF1A2), found in Halobacterium salinarum (strain ATCC 700922 / JCM 11081 / NRC-1) (Halobacterium halobium).